A 512-amino-acid polypeptide reads, in one-letter code: GMP synthase [glutamine-hydrolyzing] (512 aa).

A Glutamine amidotransferase type-1 domain is found at 6–195; sequence KIIILDFGSQ…VFNICGCQPK (190 aa). C83 (nucleophile) is an active-site residue. Catalysis depends on residues H169 and E171. The GMPS ATP-PPase domain occupies 196–387; that stretch reads WKITEFISAA…LGIDFKFVYK (192 aa). 223–229 lines the ATP pocket; the sequence is SGGVDSS.

Homodimer.

The enzyme catalyses XMP + L-glutamine + ATP + H2O = GMP + L-glutamate + AMP + diphosphate + 2 H(+). Its pathway is purine metabolism; GMP biosynthesis; GMP from XMP (L-Gln route): step 1/1. Its function is as follows. Catalyzes the synthesis of GMP from XMP. The protein is GMP synthase [glutamine-hydrolyzing] of Spiroplasma kunkelii.